The sequence spans 367 residues: Forkhead box protein I1-B (367 aa).

2 disordered regions span residues 1-21 (MNPV…HLPH) and 213-274 (DNGN…PPTV). The fork-head DNA-binding region spans 128–222 (RPPYSYSALI…DNGNFRRKRK (95 aa)). A compositionally biased stretch (basic and acidic residues) spans 233–246 (AKRDEDHLNPKGKE). The span at 252–274 (TPSSSPEVLSPTGHSKSPSPPTV) shows a compositional bias: polar residues.

In terms of tissue distribution, initially localized to the animal hemisphere (the presumptive ectoderm) of early-mid blastula embryos. Becomes restricted to head placodes, excluding the otic placodes, by the tailbud stages.

The protein resides in the nucleus. Its function is as follows. Transcription factor. Essential for ventral specification of the early cephalic (head) ectoderm during gastrulation, playing a role in the 'non-neural' versus 'neural' cell fate choice. Binds to DNA via the target sequence 5'-[AG]TAAA[CT]A-3', with 5'-ATAAACA-3' being the preferred binding site. This Xenopus laevis (African clawed frog) protein is Forkhead box protein I1-B (foxi1-b).